The primary structure comprises 284 residues: Bifunctional protein FolD (284 aa).

NADP(+) contacts are provided by residues 165–167 (GRS) and serine 190.

This sequence belongs to the tetrahydrofolate dehydrogenase/cyclohydrolase family. In terms of assembly, homodimer.

The enzyme catalyses (6R)-5,10-methylene-5,6,7,8-tetrahydrofolate + NADP(+) = (6R)-5,10-methenyltetrahydrofolate + NADPH. The catalysed reaction is (6R)-5,10-methenyltetrahydrofolate + H2O = (6R)-10-formyltetrahydrofolate + H(+). The protein operates within one-carbon metabolism; tetrahydrofolate interconversion. Functionally, catalyzes the oxidation of 5,10-methylenetetrahydrofolate to 5,10-methenyltetrahydrofolate and then the hydrolysis of 5,10-methenyltetrahydrofolate to 10-formyltetrahydrofolate. This chain is Bifunctional protein FolD, found in Streptococcus equi subsp. equi (strain 4047).